Consider the following 837-residue polypeptide: Outer membrane usher protein HifC (837 aa).

An N-terminal signal peptide occupies residues 1–26 (MKTKNFPLNKIAFACTLLLANPVAWA). C813 and C833 are disulfide-bonded.

Belongs to the fimbrial export usher family.

It is found in the cell outer membrane. Its function is as follows. Essential for piliation. The protein is Outer membrane usher protein HifC (hifC) of Haemophilus influenzae.